A 176-amino-acid chain; its full sequence is SsrA-binding protein (176 aa).

Positions 1-33 (MTEAGAKKAAGKKSGKGKGKNAKKNQPNITPVA) are disordered. A compositionally biased stretch (basic residues) spans 9 to 23 (AAGKKSGKGKGKNAK).

This sequence belongs to the SmpB family.

The protein resides in the cytoplasm. Required for rescue of stalled ribosomes mediated by trans-translation. Binds to transfer-messenger RNA (tmRNA), required for stable association of tmRNA with ribosomes. tmRNA and SmpB together mimic tRNA shape, replacing the anticodon stem-loop with SmpB. tmRNA is encoded by the ssrA gene; the 2 termini fold to resemble tRNA(Ala) and it encodes a 'tag peptide', a short internal open reading frame. During trans-translation Ala-aminoacylated tmRNA acts like a tRNA, entering the A-site of stalled ribosomes, displacing the stalled mRNA. The ribosome then switches to translate the ORF on the tmRNA; the nascent peptide is terminated with the 'tag peptide' encoded by the tmRNA and targeted for degradation. The ribosome is freed to recommence translation, which seems to be the essential function of trans-translation. This Rhodopirellula baltica (strain DSM 10527 / NCIMB 13988 / SH1) protein is SsrA-binding protein.